The sequence spans 928 residues: MDGTDALEKLTKGLSGGGGSLHQTKLLMEFQLRGLPVPALLNSSTTEQFLNTVAQLPTDLSKFIRDYRVFALVRAAYFLEPPSSIDPLEAARALGRLVDILSSQPPQNTAPAQPPTSDDTLNNCTLLKLLAHYADQIAGFKTPALPPVPPGIIGLFTCVEQMYHACFQKYWAAALPPMWILTYDPPTSPLQDWLIVAYGNKEGLLLPSGIPSEEVLAKTLVTEHHELFVSRSNSTETAVTMPVSKERALAIYRVFAKGEVVAENTPILAFTDVELSTLKPHYLFIYDFIIEALCKSYTYSCTQARLESFLSRGIDFMTDLGQYLDTATSGKQQLTHSQIKEIKYRLLSCGLSASACDVFRTVIMTLPYRPTPNLANLSTFMGMVHQLTMFGHYFYRCLGSYSPTGLAFTELQKILTRASAEQTERNPWRHPGISDIPLRWKISRALAFFVPPAPINTLQRVYAALPSQLMRAIFEISVKTTWGGAVPANLARDIDTGPNTQHISSTPPPTLKDVETYCQGLRVGDTEYDEDIVRSPLFADAFTKSHLLPILREVLENRLQKNRALFQIRWLIIFAAEAATGLIPARRPLARAYFHIMDILEERHSQDALYNLLDCIQELFTHIRQAVPDAQCPHAFLQSLFVFQFRPFVLKHQQGVTLFLDGLQTSLPPVISLANLGDKLCRLEFEYDSEGDFVRVPVAPPEQPPHVHLSHFKKTIQTIEQATREATVAMTTIAKPIYPAYIRLLQRLEYLNRLNHHILRIPFPQDALSELQETYLAAFARLTKLAADAANTCSYSLTKYFGVLFQHQLVPTAIVKKLLHFDEAKDTTEAFLQSLAQPVVQGQRQGAAGGSGVLTQKELELLNKINPQFTDAQANIPPSIKRSYSNKYDVPEVSVDWETYSRSAFEAPDDELRFVPLTLAGLRKLFVE.

The interaction with large tegument protein stretch occupies residues 482–928 (WGGAVPANLA…LAGLRKLFVE (447 aa)).

Belongs to the herpesviridae inner tegument protein family. As to quaternary structure, interacts (via C-terminus) with the large tegument protein/LTP (via N-terminus).

It is found in the virion tegument. It localises to the host cytoplasm. The protein resides in the host nucleus. The protein localises to the host Golgi apparatus. Its subcellular location is the host trans-Golgi network. Functionally, plays an essential role in cytoplasmic secondary envelopment during viral egress. Interacts with the capsid via the large tegument protein/LTP and participates in its transport to the host trans-Golgi network (TGN) where secondary envelopment occurs. Modulates tegumentation and capsid accumulation at the viral assembly complex. In Homo sapiens (Human), this protein is Inner tegument protein (ORF63).